A 515-amino-acid chain; its full sequence is Protein nucleotidyltransferase YdiU (515 aa).

Gly-101, Gly-103, Arg-104, Lys-124, Asp-136, Gly-137, Arg-194, and Arg-201 together coordinate ATP. The active-site Proton acceptor is the Asp-269. Mg(2+) is bound by residues Asn-270 and Asp-279. Asp-279 is an ATP binding site.

It belongs to the SELO family. It depends on Mg(2+) as a cofactor. Requires Mn(2+) as cofactor.

The enzyme catalyses L-seryl-[protein] + ATP = 3-O-(5'-adenylyl)-L-seryl-[protein] + diphosphate. It catalyses the reaction L-threonyl-[protein] + ATP = 3-O-(5'-adenylyl)-L-threonyl-[protein] + diphosphate. The catalysed reaction is L-tyrosyl-[protein] + ATP = O-(5'-adenylyl)-L-tyrosyl-[protein] + diphosphate. It carries out the reaction L-histidyl-[protein] + UTP = N(tele)-(5'-uridylyl)-L-histidyl-[protein] + diphosphate. The enzyme catalyses L-seryl-[protein] + UTP = O-(5'-uridylyl)-L-seryl-[protein] + diphosphate. It catalyses the reaction L-tyrosyl-[protein] + UTP = O-(5'-uridylyl)-L-tyrosyl-[protein] + diphosphate. Its function is as follows. Nucleotidyltransferase involved in the post-translational modification of proteins. It can catalyze the addition of adenosine monophosphate (AMP) or uridine monophosphate (UMP) to a protein, resulting in modifications known as AMPylation and UMPylation. In Cytophaga hutchinsonii (strain ATCC 33406 / DSM 1761 / CIP 103989 / NBRC 15051 / NCIMB 9469 / D465), this protein is Protein nucleotidyltransferase YdiU.